The primary structure comprises 216 residues: Urease operon 23 kDa accessory protein (216 aa).

Functionally, involved in the expression of hydrogenase activity. May be a regulatory gene affecting the expression of the hydrogenase operon or could be involved in the process of nickel incorporation into the hydrogenase apoenzyme. The sequence is that of Urease operon 23 kDa accessory protein from Rhizobium meliloti (strain 1021) (Ensifer meliloti).